We begin with the raw amino-acid sequence, 132 residues long: Riboflavin kinase (132 aa).

Position 10–15 (10–15 (GLGEGR)) interacts with CDP. Residues Thr-39 and Asn-41 each contribute to the Mg(2+) site. The FMN site is built by Thr-95, Tyr-96, and Glu-103. 108–111 (MKLR) is a CDP binding site.

In terms of assembly, monomer. It depends on Mg(2+) as a cofactor.

It catalyses the reaction riboflavin + CTP = CDP + FMN + H(+). It participates in cofactor biosynthesis; FMN biosynthesis; FMN from riboflavin (CTP route): step 1/1. In terms of biological role, catalyzes the CTP-dependent phosphorylation of riboflavin (vitamin B2) to form flavin mononucleotide (FMN). Can also utilize UTP as the phosphate donor, although less efficiently, and it is unclear if ATP and GTP can also serve as substrates or not. The polypeptide is Riboflavin kinase (ribK) (Methanocaldococcus jannaschii (strain ATCC 43067 / DSM 2661 / JAL-1 / JCM 10045 / NBRC 100440) (Methanococcus jannaschii)).